A 156-amino-acid chain; its full sequence is MSRRNAAVKRPVLPDPQFNSRLASMMISRLMKHGKKSTAQRILSDAFSLISERTGGNAVELFETAVKNATPLVEVRARRVGGATYQVPMEVRQERGTAMALRWLVTFSRARNGKSMSQKLAGELMDAANETGSAVKKREDTHKMAEANKAFAHYRY.

This sequence belongs to the universal ribosomal protein uS7 family. As to quaternary structure, part of the 30S ribosomal subunit. Contacts proteins S9 and S11.

One of the primary rRNA binding proteins, it binds directly to 16S rRNA where it nucleates assembly of the head domain of the 30S subunit. Is located at the subunit interface close to the decoding center, probably blocks exit of the E-site tRNA. The protein is Small ribosomal subunit protein uS7 of Prochlorococcus marinus (strain MIT 9301).